The sequence spans 563 residues: Formate--tetrahydrofolate ligase (563 aa).

65-72 serves as a coordination point for ATP; that stretch reads TPLGEGKT.

This sequence belongs to the formate--tetrahydrofolate ligase family.

The enzyme catalyses (6S)-5,6,7,8-tetrahydrofolate + formate + ATP = (6R)-10-formyltetrahydrofolate + ADP + phosphate. It participates in one-carbon metabolism; tetrahydrofolate interconversion. This Cutibacterium acnes (strain DSM 16379 / KPA171202) (Propionibacterium acnes) protein is Formate--tetrahydrofolate ligase.